The sequence spans 530 residues: uncharacterized protein (530 aa).

Positions 485–529 form a coiled coil; that stretch reads SKEENREIKLSIRENKEKQRKKSVEKSVSKLQNQLNRLLNKNTIE.

This is an uncharacterized protein from Acanthamoeba polyphaga (Amoeba).